A 79-amino-acid chain; its full sequence is Acyl carrier protein (79 aa).

The region spanning 2–77 (SEIADKVKKI…DAIDYIEKQK (76 aa)) is the Carrier domain. An O-(pantetheine 4'-phosphoryl)serine modification is found at Ser-37.

This sequence belongs to the acyl carrier protein (ACP) family. 4'-phosphopantetheine is transferred from CoA to a specific serine of apo-ACP by AcpS. This modification is essential for activity because fatty acids are bound in thioester linkage to the sulfhydryl of the prosthetic group.

It is found in the cytoplasm. It participates in lipid metabolism; fatty acid biosynthesis. In terms of biological role, carrier of the growing fatty acid chain in fatty acid biosynthesis. The polypeptide is Acyl carrier protein (Gluconacetobacter diazotrophicus (strain ATCC 49037 / DSM 5601 / CCUG 37298 / CIP 103539 / LMG 7603 / PAl5)).